The sequence spans 272 residues: Glucosyl-3-phosphoglycerate/mannosyl-3-phosphoglycerate phosphatase (272 aa).

Asp8 functions as the Nucleophile in the catalytic mechanism. The Mg(2+) site is built by Asp8, Asp10, and Asp214.

Belongs to the HAD-like hydrolase superfamily. MPGP family. As to quaternary structure, monomer. Co(2+) is required as a cofactor. Mg(2+) serves as cofactor. The cofactor is Ni(2+).

It carries out the reaction (2R)-2-O-(alpha-D-glucopyranosyl)-3-phospho-glycerate + H2O = (2R)-2-O-(alpha-D-glucopyranosyl)-glycerate + phosphate. It catalyses the reaction 2-O-(alpha-D-mannosyl)-3-phosphoglycerate + H2O = (2R)-2-O-(alpha-D-mannosyl)-glycerate + phosphate. Involved in the biosynthesis of glucosylglycerate. Catalyzes the dephosphorylation of glucosyl-3-phosphoglycerate (GPG) and mannosyl-3-phosphoglycerate (MPG) to glucosylglycerate (GG) and mannosylglycerate (MG), respectively. The polypeptide is Glucosyl-3-phosphoglycerate/mannosyl-3-phosphoglycerate phosphatase (Methanococcoides burtonii (strain DSM 6242 / NBRC 107633 / OCM 468 / ACE-M)).